A 232-amino-acid chain; its full sequence is 7-cyano-7-deazaguanine synthase 1 (232 aa).

7–17 serves as a coordination point for ATP; the sequence is CSGGLDSVSLA. 4 residues coordinate Zn(2+): cysteine 185, cysteine 193, cysteine 196, and cysteine 199.

It belongs to the QueC family. The cofactor is Zn(2+).

The enzyme catalyses 7-carboxy-7-deazaguanine + NH4(+) + ATP = 7-cyano-7-deazaguanine + ADP + phosphate + H2O + H(+). It participates in purine metabolism; 7-cyano-7-deazaguanine biosynthesis. Its function is as follows. Catalyzes the ATP-dependent conversion of 7-carboxy-7-deazaguanine (CDG) to 7-cyano-7-deazaguanine (preQ(0)). The protein is 7-cyano-7-deazaguanine synthase 1 of Mesorhizobium japonicum (strain LMG 29417 / CECT 9101 / MAFF 303099) (Mesorhizobium loti (strain MAFF 303099)).